The primary structure comprises 1078 residues: Lon protease homolog, mitochondrial (1078 aa).

A mitochondrion-targeting transit peptide spans 1–27 (MIKASKCNKPRALFLVRVSIPRTFIRN). The segment covering 71-123 (SEKEKQPSTDKSNDKDKPSRKEKGKDKEKENEEKKDINMDEKYEINEETDTKP) has biased composition (basic and acidic residues). The disordered stretch occupies residues 71-179 (SEKEKQPSTD…KEFLSPSDSG (109 aa)). A compositionally biased stretch (low complexity) spans 127–157 (PNNPVSSKSNISSSSGGDNNNNNNNNNNNND). Basic and acidic residues predominate over residues 158–172 (SDGKNDDGSPKDKEF). Residues 182–400 (PPFLAIAMKD…LSLQLLQVEA (219 aa)) enclose the Lon N-terminal domain. ATP is bound at residue 548–555 (GPPGTGKT). Residues 792–825 (NSPIEYIQSNTEVKAETTTESQQEQEKEKEKDEE) are disordered. Positions 815-825 (EQEKEKEKDEE) are enriched in basic and acidic residues. The Lon proteolytic domain occupies 861-1049 (TLNPGVATGL…SEVFEHLFQG (189 aa)). Catalysis depends on residues S955 and K998.

The protein belongs to the peptidase S16 family. In terms of assembly, homohexamer or homoheptamer. Organized in a ring with a central cavity.

Its subcellular location is the mitochondrion matrix. The enzyme catalyses Hydrolysis of proteins in presence of ATP.. In terms of biological role, ATP-dependent serine protease that mediates the selective degradation of misfolded, unassembled or oxidatively damaged polypeptides as well as certain short-lived regulatory proteins in the mitochondrial matrix. May also have a chaperone function in the assembly of inner membrane protein complexes. Participates in the regulation of mitochondrial gene expression and in the maintenance of the integrity of the mitochondrial genome. Binds to mitochondrial DNA in a site-specific manner. The polypeptide is Lon protease homolog, mitochondrial (Candida albicans (strain SC5314 / ATCC MYA-2876) (Yeast)).